The chain runs to 568 residues: Kelch-like protein 12 (568 aa).

In terms of domain architecture, BTB spans 33–100; that stretch reads CDVTLRVEQK…VYTETVHVTV (68 aa). Positions 135 to 236 constitute a BACK domain; sequence CLGIRDFAET…LTPRYITDVI (102 aa). Kelch repeat units follow at residues 282-329, 331-379, 380-426, 427-473, 475-520, and 522-567; these read VLLV…SLHD, IYVI…TLGD, MIYV…VASG, IIYC…LLND, IYVV…VLRG, and LYAI…VLRE. An interaction with DVL3 region spans residues 405 to 568; that stretch reads QWSMLGDMQT…DAGVCVLREK (164 aa).

Component of the BCR(KLHL12) E3 ubiquitin ligase complex, at least composed of CUL3 and KLHL12 and RBX1. This complex interacts with DVL3 upon activation of the Wnt signaling pathway by WNT3A. Interacts with DRD4, KLHL2 and SEC31A. Interacts with PEF1 and PDCD6/ALG-2; interaction takes place in response to cytosolic calcium increase and leads to bridge together the BCR(KLHL12) complex and SEC31 (SEC31A or SEC31B). Ubiquitinated by the SCF(FBXL17) complex, leading to its degradation by the proteasome: ubiquitination by the SCF(FBXL17) complex takes place when aberrant BTB domain dimers are formed.

Its subcellular location is the cytoplasmic vesicle. It localises to the COPII-coated vesicle. The protein operates within protein modification; protein ubiquitination. In terms of biological role, substrate-specific adapter of a BCR (BTB-CUL3-RBX1) E3 ubiquitin ligase complex that acts as a negative regulator of Wnt signaling pathway and ER-Golgi transport. The BCR(KLHL12) complex is involved in ER-Golgi transport by regulating the size of COPII coats, thereby playing a key role in collagen export, which is required for embryonic stem (ES) cells division: BCR(KLHL12) acts by mediating monoubiquitination of SEC31 (SEC31A or SEC31B). The BCR(KLHL12) complex is also involved in neural crest specification: in response to cytosolic calcium increase, interacts with the heterodimer formed with PEF1 and PDCD6/ALG-2, leading to bridge together the BCR(KLHL12) complex and SEC31 (SEC31A or SEC31B), promoting monoubiquitination of SEC31 and subsequent collagen export. As part of the BCR(KLHL12) complex, also acts as a negative regulator of the Wnt signaling pathway by mediating ubiquitination and subsequent proteolysis of DVL3. The BCR(KLHL12) complex also mediates polyubiquitination of DRD4 and PEF1, without leading to degradation of these proteins. The protein is Kelch-like protein 12 (Klhl12) of Rattus norvegicus (Rat).